The sequence spans 189 residues: GMP synthase [glutamine-hydrolyzing] subunit A (189 aa).

The Glutamine amidotransferase type-1 domain occupies 1-189 (MIVILNNGGQ…CKKCGFGFEE (189 aa)). Residue C76 is the Nucleophile of the active site. Catalysis depends on residues H163 and E165.

As to quaternary structure, heterodimer composed of a glutamine amidotransferase subunit (A) and a GMP-binding subunit (B).

The catalysed reaction is XMP + L-glutamine + ATP + H2O = GMP + L-glutamate + AMP + diphosphate + 2 H(+). Its pathway is purine metabolism; GMP biosynthesis; GMP from XMP (L-Gln route): step 1/1. Its function is as follows. Catalyzes the synthesis of GMP from XMP. In Methanococcus maripaludis (strain DSM 14266 / JCM 13030 / NBRC 101832 / S2 / LL), this protein is GMP synthase [glutamine-hydrolyzing] subunit A.